A 334-amino-acid chain; its full sequence is Chitinase 9 (334 aa).

A signal peptide spans 1–23 (MKATTTAVALLVAAAAMAAQVVA). Positions 24-64 (EQCGSQAGGALCPNCLCCSSYGWCGSTSDYCGDGCQSQCDG) constitute a Chitin-binding type-1 domain. 8 disulfide bridges follow: Cys-26–Cys-41, Cys-35–Cys-47, Cys-38–Cys-65, Cys-40–Cys-54, Cys-58–Cys-62, Cys-107–Cys-169, Cys-181–Cys-189, and Cys-288–Cys-320. Glu-151 serves as the catalytic Proton donor.

This sequence belongs to the glycosyl hydrolase 19 family. Chitinase class I subfamily. Expressed at high levels in roots, sheaths and meristems.

The catalysed reaction is Random endo-hydrolysis of N-acetyl-beta-D-glucosaminide (1-&gt;4)-beta-linkages in chitin and chitodextrins.. May play a role in defense against fungal pathogens containing chitin. The sequence is that of Chitinase 9 (Cht9) from Oryza sativa subsp. japonica (Rice).